The sequence spans 336 residues: Anthranilate phosphoribosyltransferase (336 aa).

5-phospho-alpha-D-ribose 1-diphosphate is bound by residues Gly82, 85–86, Thr90, 92–95, 110–118, and Ser122; these read GD, NIST, and KHGNRSVSS. Position 82 (Gly82) interacts with anthranilate. Ser94 contributes to the Mg(2+) binding site. Position 113 (Asn113) interacts with anthranilate. An anthranilate-binding site is contributed by Arg168. Residues Asp227 and Glu228 each contribute to the Mg(2+) site.

The protein belongs to the anthranilate phosphoribosyltransferase family. Homodimer. Mg(2+) serves as cofactor.

The enzyme catalyses N-(5-phospho-beta-D-ribosyl)anthranilate + diphosphate = 5-phospho-alpha-D-ribose 1-diphosphate + anthranilate. The protein operates within amino-acid biosynthesis; L-tryptophan biosynthesis; L-tryptophan from chorismate: step 2/5. In terms of biological role, catalyzes the transfer of the phosphoribosyl group of 5-phosphorylribose-1-pyrophosphate (PRPP) to anthranilate to yield N-(5'-phosphoribosyl)-anthranilate (PRA). The chain is Anthranilate phosphoribosyltransferase from Leptospira interrogans serogroup Icterohaemorrhagiae serovar copenhageni (strain Fiocruz L1-130).